The chain runs to 285 residues: Cyclin-Y-like protein 1B (285 aa).

In terms of domain architecture, Cyclin N-terminal spans 111 to 209; it reads PKRNCIFRHF…CFLELLEFNI (99 aa).

The protein belongs to the cyclin family. Cyclin Y subfamily.

This Homo sapiens (Human) protein is Cyclin-Y-like protein 1B.